The sequence spans 706 residues: Serine/threonine-protein kinase BUR1 (706 aa).

Residues 38–339 enclose the Protein kinase domain; that stretch reads YKPLGKIGEG…AIGGKNHAYF (302 aa). Residues 44 to 52 and K67 each bind ATP; that span reads IGEGTFGEV. D168 acts as the Proton acceptor in catalysis. Composition is skewed to basic and acidic residues over residues 360–523, 545–570, and 594–623; these read LDNH…RDSR, DYDR…DMTR, and DKVE…KSRD. The disordered stretch occupies residues 360–706; it reads LDNHKRREQE…YGRKRPRIER (347 aa). Residues 625–648 are compositionally biased toward pro residues; that stretch reads GPPPGPPLPADGPPPPPSSNPPRP. Positions 659-706 are enriched in basic and acidic residues; sequence WRRDSRDRRESRDRDGRDRDGRDRRLSSSRYARDEFDEYGRKRPRIER.

The protein belongs to the protein kinase superfamily. CMGC Ser/Thr protein kinase family. CDC2/CDKX subfamily.

Its subcellular location is the nucleus. The catalysed reaction is L-seryl-[protein] + ATP = O-phospho-L-seryl-[protein] + ADP + H(+). It carries out the reaction L-threonyl-[protein] + ATP = O-phospho-L-threonyl-[protein] + ADP + H(+). The enzyme catalyses [DNA-directed RNA polymerase] + ATP = phospho-[DNA-directed RNA polymerase] + ADP + H(+). In terms of biological role, serine/threonine-protein kinase involved in transcription regulation. Phosphorylates the UBC2/RAD6 ubiquitin-conjugating enzyme (E2), leading to monoubiquitination of histone H2B and the silencing of telomeric-associated genes. Also required for histone H3 methylation. Necessary for the recovery from pheromone-induced growth arrest in the cell cycle G1 phase. In Yarrowia lipolytica (strain CLIB 122 / E 150) (Yeast), this protein is Serine/threonine-protein kinase BUR1 (BUR1).